The sequence spans 105 residues: MIASKFGIGQQVRHSLLGYLGVVVDIDPEYSLDEPSPDELAVNDELRAAPWYHVVMEDDNGQPVHTYLAEAQLRSEMRDEHPEQPSMDELARTIRKQLQAPRLRN.

The interval 77-105 (MRDEHPEQPSMDELARTIRKQLQAPRLRN) is disordered.

Belongs to the HspQ family.

It localises to the cytoplasm. Functionally, involved in the degradation of certain denaturated proteins, including DnaA, during heat shock stress. The polypeptide is Heat shock protein HspQ (Salmonella arizonae (strain ATCC BAA-731 / CDC346-86 / RSK2980)).